A 178-amino-acid polypeptide reads, in one-letter code: Alkyl hydroperoxide reductase AhpD (178 aa).

Residue Cys-130 is the Proton donor of the active site. Cys-130 and Cys-133 form a disulfide bridge. Cys-133 (cysteine sulfenic acid (-SOH) intermediate) is an active-site residue.

This sequence belongs to the AhpD family. As to quaternary structure, homotrimer.

It carries out the reaction N(6)-[(R)-dihydrolipoyl]-L-lysyl-[lipoyl-carrier protein] + a hydroperoxide = N(6)-[(R)-lipoyl]-L-lysyl-[lipoyl-carrier protein] + an alcohol + H2O. Its function is as follows. Antioxidant protein with alkyl hydroperoxidase activity. Required for the reduction of the AhpC active site cysteine residues and for the regeneration of the AhpC enzyme activity. In Mycobacterium ulcerans (strain Agy99), this protein is Alkyl hydroperoxide reductase AhpD.